We begin with the raw amino-acid sequence, 514 residues long: 2-isopropylmalate synthase (514 aa).

The Pyruvate carboxyltransferase domain maps to 4–266; the sequence is INVFDTSLRD…KTGLKLSELK (263 aa). 4 residues coordinate Mn(2+): D13, H201, H203, and N237. Residues 390 to 514 are regulatory domain; it reads ELTALQVTYG…AKREMAKVES (125 aa).

The protein belongs to the alpha-IPM synthase/homocitrate synthase family. LeuA type 1 subfamily. In terms of assembly, homodimer. The cofactor is Mn(2+).

The protein resides in the cytoplasm. The catalysed reaction is 3-methyl-2-oxobutanoate + acetyl-CoA + H2O = (2S)-2-isopropylmalate + CoA + H(+). Its pathway is amino-acid biosynthesis; L-leucine biosynthesis; L-leucine from 3-methyl-2-oxobutanoate: step 1/4. Functionally, catalyzes the condensation of the acetyl group of acetyl-CoA with 3-methyl-2-oxobutanoate (2-ketoisovalerate) to form 3-carboxy-3-hydroxy-4-methylpentanoate (2-isopropylmalate). The protein is 2-isopropylmalate synthase of Shouchella clausii (strain KSM-K16) (Alkalihalobacillus clausii).